Here is a 308-residue protein sequence, read N- to C-terminus: Aspartate carbamoyltransferase catalytic subunit (308 aa).

R59 and T60 together coordinate carbamoyl phosphate. An L-aspartate-binding site is contributed by K87. The carbamoyl phosphate site is built by R109, H139, and Q142. The L-aspartate site is built by R172 and R224. Positions 265 and 266 each coordinate carbamoyl phosphate.

The protein belongs to the aspartate/ornithine carbamoyltransferase superfamily. ATCase family. Heterododecamer (2C3:3R2) of six catalytic PyrB chains organized as two trimers (C3), and six regulatory PyrI chains organized as three dimers (R2).

It catalyses the reaction carbamoyl phosphate + L-aspartate = N-carbamoyl-L-aspartate + phosphate + H(+). Its pathway is pyrimidine metabolism; UMP biosynthesis via de novo pathway; (S)-dihydroorotate from bicarbonate: step 2/3. Functionally, catalyzes the condensation of carbamoyl phosphate and aspartate to form carbamoyl aspartate and inorganic phosphate, the committed step in the de novo pyrimidine nucleotide biosynthesis pathway. This is Aspartate carbamoyltransferase catalytic subunit from Enterococcus faecalis (strain ATCC 700802 / V583).